A 145-amino-acid polypeptide reads, in one-letter code: Large ribosomal subunit protein bL19 (145 aa).

This sequence belongs to the bacterial ribosomal protein bL19 family.

This protein is located at the 30S-50S ribosomal subunit interface and may play a role in the structure and function of the aminoacyl-tRNA binding site. In Brucella anthropi (strain ATCC 49188 / DSM 6882 / CCUG 24695 / JCM 21032 / LMG 3331 / NBRC 15819 / NCTC 12168 / Alc 37) (Ochrobactrum anthropi), this protein is Large ribosomal subunit protein bL19.